The sequence spans 260 residues: Adenosylcobinamide-GDP ribazoletransferase (260 aa).

7 consecutive transmembrane segments (helical) span residues Pro-42–Ile-62, Leu-64–Leu-84, Phe-117–Ile-137, Tyr-144–Trp-164, Gly-192–Ile-212, Ala-214–Gly-234, and Thr-240–Leu-260.

Belongs to the CobS family. Requires Mg(2+) as cofactor.

It localises to the cell inner membrane. It carries out the reaction alpha-ribazole + adenosylcob(III)inamide-GDP = adenosylcob(III)alamin + GMP + H(+). The catalysed reaction is alpha-ribazole 5'-phosphate + adenosylcob(III)inamide-GDP = adenosylcob(III)alamin 5'-phosphate + GMP + H(+). It participates in cofactor biosynthesis; adenosylcobalamin biosynthesis; adenosylcobalamin from cob(II)yrinate a,c-diamide: step 7/7. Functionally, joins adenosylcobinamide-GDP and alpha-ribazole to generate adenosylcobalamin (Ado-cobalamin). Also synthesizes adenosylcobalamin 5'-phosphate from adenosylcobinamide-GDP and alpha-ribazole 5'-phosphate. This chain is Adenosylcobinamide-GDP ribazoletransferase, found in Brucella melitensis biotype 1 (strain ATCC 23456 / CCUG 17765 / NCTC 10094 / 16M).